Consider the following 514-residue polypeptide: 2,3-bisphosphoglycerate-independent phosphoglycerate mutase (514 aa).

2 residues coordinate Mn(2+): Asp14 and Ser64. The Phosphoserine intermediate role is filled by Ser64. Substrate contacts are provided by residues His125, 155–156 (RD), Arg187, Arg193, 263–266 (RADR), and Lys336. Positions 403, 407, 444, 445, and 463 each coordinate Mn(2+).

The protein belongs to the BPG-independent phosphoglycerate mutase family. Monomer. Mn(2+) serves as cofactor.

It carries out the reaction (2R)-2-phosphoglycerate = (2R)-3-phosphoglycerate. The protein operates within carbohydrate degradation; glycolysis; pyruvate from D-glyceraldehyde 3-phosphate: step 3/5. Catalyzes the interconversion of 2-phosphoglycerate and 3-phosphoglycerate. The sequence is that of 2,3-bisphosphoglycerate-independent phosphoglycerate mutase from Salmonella paratyphi B (strain ATCC BAA-1250 / SPB7).